A 130-amino-acid chain; its full sequence is MAENQYYGTGRRKSSAARVFIKPGNGKIVINQRSLEQYFGRETARMVVRQPLELVDMVEKLDLYITVKGGGISGQAGAIRHGITRALIEYDESLRGELRKAGFVTRDARQVERKKVGLRKARRRPQFSKR.

Belongs to the universal ribosomal protein uS9 family.

The sequence is that of Small ribosomal subunit protein uS9 from Salmonella paratyphi C (strain RKS4594).